An 84-amino-acid polypeptide reads, in one-letter code: Mitochondrial import inner membrane translocase subunit tim9 (84 aa).

Positions 35–59 (CFSDCVQDFTSSKLSNKESECIAKC) match the Twin CX3C motif motif. Disulfide bonds link C35-C59 and C39-C55.

This sequence belongs to the small Tim family. Heterohexamer; composed of 3 copies of TIM9 and 3 copies of TIM10, named soluble 70 kDa complex. Associates with the TIM22 complex, whose core is composed of TIM22 and TIM54. Interacts with the transmembrane regions of multi-pass transmembrane proteins in transit.

It is found in the mitochondrion inner membrane. In terms of biological role, mitochondrial intermembrane chaperone that participates in the import and insertion of multi-pass transmembrane proteins into the mitochondrial inner membrane. Also required for the transfer of beta-barrel precursors from the TOM complex to the sorting and assembly machinery (SAM complex) of the outer membrane. Acts as a chaperone-like protein that protects the hydrophobic precursors from aggregation and guide them through the mitochondrial intermembrane space. The polypeptide is Mitochondrial import inner membrane translocase subunit tim9 (tim9) (Schizosaccharomyces pombe (strain 972 / ATCC 24843) (Fission yeast)).